The chain runs to 204 residues: Kunitz-type trypsin inhibitor KTI2 (204 aa).

A signal peptide spans 1 to 25 (MKSTIFFALFLVCAFTISYLPSATA). Cystine bridges form between cysteine 65–cysteine 112 and cysteine 160–cysteine 169.

It belongs to the protease inhibitor I3 (leguminous Kunitz-type inhibitor) family. Seed, and at low levels in leaf, root, and stem.

Functionally, has probably no trypsin inhibitor activity. KTi2 is responsible for most of the Kunitz trypsin inhibitor activity and protein found in soybean seeds. This chain is Kunitz-type trypsin inhibitor KTI2 (KTI2), found in Glycine max (Soybean).